The following is a 347-amino-acid chain: Ribosomal RNA large subunit methyltransferase M (347 aa).

S-adenosyl-L-methionine-binding positions include S184, 217 to 220 (APGG), D236, D256, and D272. K301 (proton acceptor) is an active-site residue.

This sequence belongs to the class I-like SAM-binding methyltransferase superfamily. RNA methyltransferase RlmE family. RlmM subfamily. Monomer.

It localises to the cytoplasm. The catalysed reaction is cytidine(2498) in 23S rRNA + S-adenosyl-L-methionine = 2'-O-methylcytidine(2498) in 23S rRNA + S-adenosyl-L-homocysteine + H(+). Functionally, catalyzes the 2'-O-methylation at nucleotide C2498 in 23S rRNA. The sequence is that of Ribosomal RNA large subunit methyltransferase M from Xanthomonas campestris pv. campestris (strain 8004).